The primary structure comprises 305 residues: Coiled-coil domain-containing protein 50 (305 aa).

Ala-2 is subject to N-acetylalanine. The residue at position 5 (Ser-5) is a Phosphoserine. Residues 86-130 (EIAQEIQEKLTIEAERRRIQEKKDEDIARLLQEKELQEEKRRKKH) are a coiled coil. 2 disordered regions span residues 122-142 (QEEK…VFGD) and 218-305 (KKAK…HNKQ). Composition is skewed to basic and acidic residues over residues 218–239 (KKAK…ECKL) and 247–263 (KSKE…DRPS). Residues 279 to 305 (THFTNQHSTTWHLPKSESSQKGFHNKQ) show a composition bias toward polar residues.

In terms of assembly, interacts with RNF126. Post-translationally, phosphorylated on tyrosine residues. Widely expressed.

It localises to the cytoplasm. In terms of biological role, involved in EGFR signaling. The chain is Coiled-coil domain-containing protein 50 (Ccdc50) from Mus musculus (Mouse).